The following is a 1622-amino-acid chain: ABC transporter C family member 1 (1622 aa).

A run of 9 helical transmembrane segments spans residues 37–57, 73–93, 110–130, 145–165, 174–194, 336–356, 440–460, 527–547, and 557–577; these read FVLGISHLVLLILCLYRLWLI, FSYFLALLAAYATAEPLFRLV, EAFMLVLEAFAWGSALVMTVV, FAVIYALVGDMVLLNLVLSVK, YLYISEVAVQVAFGTLLFVYF, AWIGYIYAISIFVGVVLGVLC, VASIIGALFLVLMFPIQTVII, FILNSIPVLVTVVSFGVFSLL, and FTSLSLFSVLRFPLFMLPNII. The ABC transmembrane type-1 1 domain maps to 302–582; the sequence is FWWGGFWKIG…LPNIITQMVN (281 aa). The 225-residue stretch at 614–838 folds into the ABC transporter 1 domain; sequence ISIRNGYFSW…GPLFQRLMEN (225 aa). Residue 649–656 coordinates ATP; that stretch reads GSTGEGKT. The disordered stretch occupies residues 852-876; sequence AEVDQTSVKPVENGNANNLQKDGIE. The span at 855-871 shows a compositional bias: polar residues; it reads DQTSVKPVENGNANNLQ. Transmembrane regions (helical) follow at residues 909-929, 951-971, 1027-1049, 1053-1072, 1138-1158, and 1172-1192; these read ALGGAWVVMMLVICYVLTQVF, PLFYNIVYALLSFGQVSVTLI, AVFVNMFMGSIAQLLSTVILIGI, LSLWAIMPLLVVFYGAYLYY, LGIRLEVLGGLMVWLTASLAV, and STMGLLLSYALSITSSLTAVL. One can recognise an ABC transmembrane type-1 2 domain in the interval 916–1200; sequence VMMLVICYVL…VLRLASLAEN (285 aa). Positions 1231-1246 are interaction with calmodulin and FKP42/TWD1; that stretch reads WPSSGSIKFEDVVLRY. One can recognise an ABC transporter 2 domain in the interval 1237–1471; the sequence is IKFEDVVLRY…GESSFSKMVQ (235 aa). 1271–1278 contributes to the ATP binding site; that stretch reads GRTGAGKS.

Belongs to the ABC transporter superfamily. ABCC family. Conjugate transporter (TC 3.A.1.208) subfamily. Interacts with calmodulin (CaM), PAS1 and FKBP42/TWD1. Ubiquitous, with higher levels in leaves and stems and lower levels in roots. Localized in the root apex, root hair tips and root epidermis.

The protein resides in the vacuole membrane. The catalysed reaction is ATP + H2O + xenobioticSide 1 = ADP + phosphate + xenobioticSide 2.. Functionally, pump for glutathione S-conjugates. Mediates the transport of S-(2,4-dinitrophenyl)-glutathione (DNP-GS), GSSG, cyanidin 3-glucoside-GS (C3G-GS) and metolachlor-GS (MOC-GS). This chain is ABC transporter C family member 1 (ABCC1), found in Arabidopsis thaliana (Mouse-ear cress).